Reading from the N-terminus, the 283-residue chain is uncharacterized protein (283 aa).

The span at 1–10 (MEVNKTTESL) shows a compositional bias: polar residues. 2 disordered regions span residues 1 to 96 (MEVN…SGGN) and 255 to 283 (DQEG…EAQI). 2 stretches are compositionally biased toward basic and acidic residues: residues 14–34 (KVEH…RDVK) and 44–81 (SKQE…VSSR).

The protein belongs to the chlamydial CPn_0705/CT_671/TC_0042 family.

This is an uncharacterized protein from Chlamydia muridarum (strain MoPn / Nigg).